The sequence spans 72 residues: Translation initiation factor IF-1 (72 aa).

Residues Met1–Arg72 form the S1-like domain.

The protein belongs to the IF-1 family. As to quaternary structure, component of the 30S ribosomal translation pre-initiation complex which assembles on the 30S ribosome in the order IF-2 and IF-3, IF-1 and N-formylmethionyl-tRNA(fMet); mRNA recruitment can occur at any time during PIC assembly.

It localises to the cytoplasm. One of the essential components for the initiation of protein synthesis. Stabilizes the binding of IF-2 and IF-3 on the 30S subunit to which N-formylmethionyl-tRNA(fMet) subsequently binds. Helps modulate mRNA selection, yielding the 30S pre-initiation complex (PIC). Upon addition of the 50S ribosomal subunit IF-1, IF-2 and IF-3 are released leaving the mature 70S translation initiation complex. In Pseudomonas syringae pv. tomato (strain ATCC BAA-871 / DC3000), this protein is Translation initiation factor IF-1.